The following is a 119-amino-acid chain: Promotilin (119 aa).

The N-terminal stretch at 1–25 (MVSRKAVVVLLVVHAAAMLASHTEA) is a signal peptide. Positions 40-72 (EKERNKGQKKSLSVQQASEELGPLDPSEPTKEE) are disordered.

This sequence belongs to the motilin family.

It is found in the secreted. Functionally, plays an important role in the regulation of interdigestive gastrointestinal motility and indirectly causes rhythmic contraction of duodenal and colonic smooth muscle. This chain is Promotilin (MLN), found in Sus scrofa (Pig).